We begin with the raw amino-acid sequence, 150 residues long: Phosphoribosyl-AMP cyclohydrolase (150 aa).

Position 93 (aspartate 93) interacts with Mg(2+). Zn(2+) is bound at residue cysteine 94. Positions 95 and 97 each coordinate Mg(2+). Cysteine 112 and cysteine 119 together coordinate Zn(2+).

This sequence belongs to the PRA-CH family. In terms of assembly, homodimer. Mg(2+) serves as cofactor. The cofactor is Zn(2+).

It localises to the cytoplasm. It carries out the reaction 1-(5-phospho-beta-D-ribosyl)-5'-AMP + H2O = 1-(5-phospho-beta-D-ribosyl)-5-[(5-phospho-beta-D-ribosylamino)methylideneamino]imidazole-4-carboxamide. It participates in amino-acid biosynthesis; L-histidine biosynthesis; L-histidine from 5-phospho-alpha-D-ribose 1-diphosphate: step 3/9. Functionally, catalyzes the hydrolysis of the adenine ring of phosphoribosyl-AMP. The polypeptide is Phosphoribosyl-AMP cyclohydrolase (Rhizobium leguminosarum bv. trifolii (strain WSM2304)).